The primary structure comprises 97 residues: Large ribosomal subunit protein uL23 (97 aa).

It belongs to the universal ribosomal protein uL23 family. Part of the 50S ribosomal subunit. Contacts protein L29, and trigger factor when it is bound to the ribosome.

Its function is as follows. One of the early assembly proteins it binds 23S rRNA. One of the proteins that surrounds the polypeptide exit tunnel on the outside of the ribosome. Forms the main docking site for trigger factor binding to the ribosome. In Sinorhizobium medicae (strain WSM419) (Ensifer medicae), this protein is Large ribosomal subunit protein uL23.